Here is a 165-residue protein sequence, read N- to C-terminus: Large ribosomal subunit protein uL15 (165 aa).

A compositionally biased stretch (basic residues) spans 1 to 30; sequence MTNKKRRQRGSRTHGGGTHKNRRGAGHRGG. Disordered regions lie at residues 1–39 and 137–165; these read MTNK…RAKH and AGGE…DDEA. The span at 150–165 shows a compositional bias: acidic residues; that stretch reads AADESENTSDDEDDEA.

This sequence belongs to the universal ribosomal protein uL15 family. As to quaternary structure, part of the 50S ribosomal subunit.

Binds to the 23S rRNA. This chain is Large ribosomal subunit protein uL15, found in Halorubrum lacusprofundi (strain ATCC 49239 / DSM 5036 / JCM 8891 / ACAM 34).